The chain runs to 314 residues: DNA-directed RNA polymerase subunit alpha (314 aa).

Residues 1 to 228 form an alpha N-terminal domain (alpha-NTD) region; sequence MAQFQIECVE…NLFIPLKDLN (228 aa). Residues 243 to 314 form an alpha C-terminal domain (alpha-CTD) region; it reads PESQIPIEEL…ITLPHEKAKA (72 aa).

Belongs to the RNA polymerase alpha chain family. Homodimer. In cyanobacteria the RNAP catalytic core is composed of 2 alpha, 1 beta, 1 beta', 1 gamma and 1 omega subunit. When a sigma factor is associated with the core the holoenzyme is formed, which can initiate transcription.

It carries out the reaction RNA(n) + a ribonucleoside 5'-triphosphate = RNA(n+1) + diphosphate. Functionally, DNA-dependent RNA polymerase catalyzes the transcription of DNA into RNA using the four ribonucleoside triphosphates as substrates. This chain is DNA-directed RNA polymerase subunit alpha, found in Synechocystis sp. (strain ATCC 27184 / PCC 6803 / Kazusa).